The chain runs to 131 residues: NADPH-dependent 7-cyano-7-deazaguanine reductase (131 aa).

Cys-41 serves as the catalytic Thioimide intermediate. Asp-48 functions as the Proton donor in the catalytic mechanism. Substrate-binding positions include 63 to 65 (VEL) and 82 to 83 (HE).

It belongs to the GTP cyclohydrolase I family. QueF type 1 subfamily.

The protein localises to the cytoplasm. It catalyses the reaction 7-aminomethyl-7-carbaguanine + 2 NADP(+) = 7-cyano-7-deazaguanine + 2 NADPH + 3 H(+). It participates in tRNA modification; tRNA-queuosine biosynthesis. Catalyzes the NADPH-dependent reduction of 7-cyano-7-deazaguanine (preQ0) to 7-aminomethyl-7-deazaguanine (preQ1). The protein is NADPH-dependent 7-cyano-7-deazaguanine reductase of Nitratiruptor sp. (strain SB155-2).